A 429-amino-acid chain; its full sequence is CBL-interacting serine/threonine-protein kinase 7 (429 aa).

The region spanning Y25 to F280 is the Protein kinase domain. ATP contacts are provided by residues L31–V39 and K54. The active-site Proton acceptor is the D149. Positions D167–E195 are activation loop. S171 is modified (phosphoserine). Position 184 is a phosphothreonine (T184). Residues S302–E326 enclose the NAF domain. A PPI region spans residues K330–M363.

This sequence belongs to the protein kinase superfamily. CAMK Ser/Thr protein kinase family. SNF1 subfamily. In terms of assembly, interacts with CBL1, CBL2 and CBL3. Mn(2+) serves as cofactor. In terms of processing, autophosphorylated. In terms of tissue distribution, strongly expressed in leaves, but barely expressed in roots, stems or flowers.

It carries out the reaction L-seryl-[protein] + ATP = O-phospho-L-seryl-[protein] + ADP + H(+). The catalysed reaction is L-threonyl-[protein] + ATP = O-phospho-L-threonyl-[protein] + ADP + H(+). In terms of biological role, CIPK serine-threonine protein kinases interact with CBL proteins. Binding of a CBL protein to the regulatory NAF domain of CIPK protein lead to the activation of the kinase in a calcium-dependent manner. Phosphorylates the rice sucrose synthase (SuSy) in vitro in an allosteric manner. Involved in cold response. This Arabidopsis thaliana (Mouse-ear cress) protein is CBL-interacting serine/threonine-protein kinase 7 (CIPK7).